The following is a 223-amino-acid chain: Large ribosomal subunit protein uL3 (223 aa).

Belongs to the universal ribosomal protein uL3 family. As to quaternary structure, part of the 50S ribosomal subunit. Forms a cluster with proteins L14 and L19.

In terms of biological role, one of the primary rRNA binding proteins, it binds directly near the 3'-end of the 23S rRNA, where it nucleates assembly of the 50S subunit. This is Large ribosomal subunit protein uL3 from Cutibacterium acnes (strain DSM 16379 / KPA171202) (Propionibacterium acnes).